The primary structure comprises 38 residues: Potassium channel toxin alpha-KTx 3.8 (38 aa).

3 disulfides stabilise this stretch: Cys8/Cys28, Cys14/Cys33, and Cys18/Cys35. The interval 26 to 33 is interaction with Ca(2+)-activated K(+) channels; it reads GKCMNGKC.

In terms of tissue distribution, expressed by the venom gland.

It localises to the secreted. In terms of biological role, potassium channel inhibitor. The protein is Potassium channel toxin alpha-KTx 3.8 of Hottentotta tamulus sindicus (Scorpion).